Here is an 827-residue protein sequence, read N- to C-terminus: N-terminal kinase-like protein (827 aa).

A Protein kinase domain is found at 1-309; that stretch reads MWFWSRDPAR…PEDFCRHKIL (309 aa). 3 HEAT repeats span residues 345 to 383, 384 to 422, and 502 to 540; these read IIPVVVKMFSSTDRAMRIRLLQQMENFIQYLNEPTVNAQ, IFPHVVHGFMDTNPAIREQTVKSMLLLAPKLNENNLNME, and VLPVLCGVTVDPEKNVREQAFKAIRSFLDKLETVSEDPS. Low complexity predominate over residues 586-624; it reads DAAASEGASAPSTASEASKPDTAPSSSAPPAAASTAPTS. Positions 586-827 are disordered; that stretch reads DAAASEGASA…PLKLGVRKLD (242 aa). Over residues 630-640 the composition is skewed to basic and acidic residues; that stretch reads EKGAPDNSLDR. A compositionally biased stretch (acidic residues) spans 641 to 652; that stretch reads WDDEDWGSLEDA. Positions 667-678 are enriched in basic and acidic residues; that stretch reads DWGHGKTQEKTV. 2 stretches are compositionally biased toward polar residues: residues 679–690 and 737–746; these read DFSSSRSKTKQV and NWDTSGSSGR. Residues 774–783 show a composition bias toward acidic residues; it reads GGDDNWESVE. Residues 788–817 are a coiled coil; sequence LSKAEMARKKREERQKEIEAKRAERRAAKG. The segment covering 792-814 has biased composition (basic and acidic residues); that stretch reads EMARKKREERQKEIEAKRAERRA.

Belongs to the protein kinase superfamily.

Functionally, regulates COPI-mediated retrograde protein traffic at the interface between the Golgi apparatus and the endoplasmic reticulum. Involved in the maintenance of the Golgi apparatus morphology. This chain is N-terminal kinase-like protein (scyl1), found in Xenopus tropicalis (Western clawed frog).